A 113-amino-acid chain; its full sequence is MAIEGAAATVPLSPGERLNGLNHIAELRAKVFGLNIESELERFIKDMRDPRDINNEQNKRALAAIFFMAKIPAERHSISINELTTDEKRELIKAMNHFRAVVSLFPRRLTMPN.

This is an uncharacterized protein from Escherichia coli O6:H1 (strain CFT073 / ATCC 700928 / UPEC).